Reading from the N-terminus, the 280-residue chain is Energy-coupling factor transporter ATP-binding protein EcfA1 (280 aa).

Positions 6–241 (LRTENISFQY…SHMLQEIGLD (236 aa)) constitute an ABC transporter domain. 40 to 47 (GQNGSGKS) contacts ATP.

Belongs to the ABC transporter superfamily. Energy-coupling factor EcfA family. Forms a stable energy-coupling factor (ECF) transporter complex composed of 2 membrane-embedded substrate-binding proteins (S component), 2 ATP-binding proteins (A component) and 2 transmembrane proteins (T component).

It is found in the cell membrane. In terms of biological role, ATP-binding (A) component of a common energy-coupling factor (ECF) ABC-transporter complex. Unlike classic ABC transporters this ECF transporter provides the energy necessary to transport a number of different substrates. This is Energy-coupling factor transporter ATP-binding protein EcfA1 from Bacillus cereus (strain ZK / E33L).